Consider the following 94-residue polypeptide: Protein SKIP34 (94 aa).

A disordered region spans residues 1-27 (MCYGHNQSLSSRSSLRRRSHDGEDDSV). The stretch at 23–61 (EDDSVVDDLRDRLAETEARLRRARAREAELSRRLEHMKR) forms a coiled coil.

As to quaternary structure, interacts with SPK1B/ASK2.

In Arabidopsis thaliana (Mouse-ear cress), this protein is Protein SKIP34 (SKIP34).